The following is a 340-amino-acid chain: Glycerol-3-phosphate dehydrogenase [NAD(P)+] (340 aa).

The NADPH site is built by S13, Y14, and K108. Positions 108, 137, and 139 each coordinate sn-glycerol 3-phosphate. A141 provides a ligand contact to NADPH. Residues K193, D246, S256, R257, and N258 each contribute to the sn-glycerol 3-phosphate site. The Proton acceptor role is filled by K193. R257 is a binding site for NADPH. Residues I281 and E283 each coordinate NADPH.

The protein belongs to the NAD-dependent glycerol-3-phosphate dehydrogenase family.

It localises to the cytoplasm. It carries out the reaction sn-glycerol 3-phosphate + NAD(+) = dihydroxyacetone phosphate + NADH + H(+). The enzyme catalyses sn-glycerol 3-phosphate + NADP(+) = dihydroxyacetone phosphate + NADPH + H(+). Its pathway is membrane lipid metabolism; glycerophospholipid metabolism. Functionally, catalyzes the reduction of the glycolytic intermediate dihydroxyacetone phosphate (DHAP) to sn-glycerol 3-phosphate (G3P), the key precursor for phospholipid synthesis. The polypeptide is Glycerol-3-phosphate dehydrogenase [NAD(P)+] (Bartonella henselae (strain ATCC 49882 / DSM 28221 / CCUG 30454 / Houston 1) (Rochalimaea henselae)).